A 552-amino-acid polypeptide reads, in one-letter code: Cation/acetate symporter ActP (552 aa).

14 consecutive transmembrane segments (helical) span residues 5-25 (FMMLFGLLTLPVLAWAADALT), 35-55 (IQAIVMFLLFVGGTLYITYWA), 78-98 (GLAIAGDYMSAASFLGISALV), 105-125 (GLIYSLGFLVGWPIILFLIAE), 151-171 (LSACGSLVVVALYLIAQMVGA), 185-205 (VAVILVGILMVMYVMFGGMLA), 208-228 (WVQIIKAVLLLFGATFMAVMV), 264-284 (ISALSLGLGLMFGTAGLPHIL), 305-325 (GFMGYFYFLTFIIGFGAILLV), 357-377 (FFLGFISAVAFATILAVVAGL), 407-427 (VSKITVLVLGVVAISLGILFE), 431-451 (IAFMVGLAFSIAASCNFPIII), 466-486 (IGGWAGLLTAVILMILGPTIW), and 499-519 (YDYPALFSMLVAFIGIWFFSI).

This sequence belongs to the sodium:solute symporter (SSF) (TC 2.A.21) family.

The protein resides in the cell inner membrane. Functionally, transports acetate. The sequence is that of Cation/acetate symporter ActP from Pectobacterium carotovorum subsp. carotovorum (strain PC1).